A 182-amino-acid chain; its full sequence is Large ribosomal subunit protein uL6 (182 aa).

Belongs to the universal ribosomal protein uL6 family. As to quaternary structure, part of the 50S ribosomal subunit.

Its function is as follows. This protein binds to the 23S rRNA, and is important in its secondary structure. It is located near the subunit interface in the base of the L7/L12 stalk, and near the tRNA binding site of the peptidyltransferase center. This Caldicellulosiruptor bescii (strain ATCC BAA-1888 / DSM 6725 / KCTC 15123 / Z-1320) (Anaerocellum thermophilum) protein is Large ribosomal subunit protein uL6.